Reading from the N-terminus, the 420-residue chain is Dachshund homolog dac-1 (420 aa).

The tract at residues 23–77 is disordered; it reads PSSSSSSSNNSSSNTSSSNFLSPYEYQESSTSPRDTTDSSGESSLSSSGSSSSLN. 2 stretches are compositionally biased toward low complexity: residues 24–41 and 51–77; these read SSSS…SSSN and SSTS…SSLN. The segment at 85-171 is DACHbox-N; it reads KLIKFRGHNV…LLKTSDFEKL (87 aa). Basic and acidic residues predominate over residues 242 to 258; the sequence is NSFERADDDDQNQRDAD. The tract at residues 242 to 321 is disordered; it reads NSFERADDDD…SSSSSGKNDE (80 aa). Residues 263–273 are compositionally biased toward polar residues; it reads LNLSKSGGNSE. The segment covering 297–317 has biased composition (low complexity); sequence GGSNSNSLSMSMEAGSSSSSG.

Belongs to the DACH/dachshund family. In terms of tissue distribution, expressed in AFD, AWC, ASE and ASK neurons. Expressed in the alae.

It is found in the nucleus. Transcription factor. Plays a role in the thermotactic response. This is Dachshund homolog dac-1 from Caenorhabditis elegans.